We begin with the raw amino-acid sequence, 305 residues long: Auxin-responsive protein IAA27 (305 aa).

Positions 45–49 (LRLGL) match the EAR-like (transcriptional repression) motif. 2 disordered regions span residues 96–119 (TTAT…GKST) and 155–180 (KNSM…AKSG). The segment covering 155-170 (KNSMASSQSQKPGNNS) has biased composition (polar residues). The PB1 domain maps to 185 to 287 (CLYVKVSMEG…SCKKLRIMKS (103 aa)).

This sequence belongs to the Aux/IAA family. As to quaternary structure, homodimers and heterodimers. Interacts with phytochrome A. Interacts with TPL.

Its subcellular location is the nucleus. Its function is as follows. Aux/IAA proteins are short-lived transcriptional factors that function as repressors of early auxin response genes at low auxin concentrations. Repression is thought to result from the interaction with auxin response factors (ARFs), proteins that bind to the auxin-responsive promoter element (AuxRE). Formation of heterodimers with ARF proteins may alter their ability to modulate early auxin response genes expression. In Arabidopsis thaliana (Mouse-ear cress), this protein is Auxin-responsive protein IAA27 (IAA27).